Consider the following 185-residue polypeptide: Prenylated Rab acceptor protein 1 (185 aa).

Topologically, residues 1 to 78 are cytoplasmic; that stretch reads MAAQKDQQKD…RNVEYYQSNY (78 aa). The tract at residues 30 to 54 is required for interaction with prenylated RAB3A and VAMP2; it reads AGREWLERRRATIRPWSTFVDQQRF. 2 consecutive transmembrane segments (helical) span residues 79–94 and 95–112; these read VFVFLGLILYCVVTSP and MLLVALAVFFGACYILYL. Residues 113–131 are Cytoplasmic-facing; sequence RTLESKLVLFGREVSPAHQ. 2 consecutive transmembrane segments (helical) span residues 132 to 148 and 149 to 165; these read YALAGGISFPFFWLAGA and GSAVFWVLGATLVVIGS. Residues 165–185 form a required for interaction with GDI1 region; the sequence is SHAAFHQIEAVDGEELQMEPV. The Cytoplasmic portion of the chain corresponds to 166-185; the sequence is HAAFHQIEAVDGEELQMEPV. Residues 175 to 185 are required for interaction with prenylated RAB3A and VAMP2; sequence VDGEELQMEPV. The segment at 175-185 is homodimerization; it reads VDGEELQMEPV.

It belongs to the PRA1 family. In terms of assembly, homodimer. Interacts with VAMP2 (synaptobrevin-2), GDI1, and PCLO. Interacts specifically with prenylated Rab proteins; strongly with RAB4B, RAB5A and RAB5C, and weakly with RAB4A, RAB6, RAB7A, RAB17 and RAB22. Interacts with NDRG1. Ubiquitous. Strongest expression found in placenta, pituitary gland, kidney, lung and stomach.

The protein resides in the cell membrane. It localises to the cytoplasm. It is found in the golgi apparatus. Its subcellular location is the cytoplasmic vesicle. The protein localises to the secretory vesicle. The protein resides in the synaptic vesicle. In terms of biological role, general Rab protein regulator required for vesicle formation from the Golgi complex. May control vesicle docking and fusion by mediating the action of Rab GTPases to the SNARE complexes. In addition it inhibits the removal of Rab GTPases from the membrane by GDI. This chain is Prenylated Rab acceptor protein 1 (RABAC1), found in Homo sapiens (Human).